The sequence spans 290 residues: 33 kDa chaperonin (290 aa).

Intrachain disulfides connect Cys-231–Cys-233 and Cys-263–Cys-266.

The protein belongs to the HSP33 family. Post-translationally, under oxidizing conditions two disulfide bonds are formed involving the reactive cysteines. Under reducing conditions zinc is bound to the reactive cysteines and the protein is inactive.

The protein localises to the cytoplasm. Functionally, redox regulated molecular chaperone. Protects both thermally unfolding and oxidatively damaged proteins from irreversible aggregation. Plays an important role in the bacterial defense system toward oxidative stress. This Thermotoga sp. (strain RQ2) protein is 33 kDa chaperonin.